The chain runs to 425 residues: Light-independent protochlorophyllide reductase subunit N (425 aa).

[4Fe-4S] cluster contacts are provided by Cys-17, Cys-42, and Cys-103.

This sequence belongs to the BchN/ChlN family. Protochlorophyllide reductase is composed of three subunits; ChlL, ChlN and ChlB. Forms a heterotetramer of two ChlB and two ChlN subunits. The cofactor is [4Fe-4S] cluster.

It catalyses the reaction chlorophyllide a + oxidized 2[4Fe-4S]-[ferredoxin] + 2 ADP + 2 phosphate = protochlorophyllide a + reduced 2[4Fe-4S]-[ferredoxin] + 2 ATP + 2 H2O. Its pathway is porphyrin-containing compound metabolism; chlorophyll biosynthesis (light-independent). In terms of biological role, component of the dark-operative protochlorophyllide reductase (DPOR) that uses Mg-ATP and reduced ferredoxin to reduce ring D of protochlorophyllide (Pchlide) to form chlorophyllide a (Chlide). This reaction is light-independent. The NB-protein (ChlN-ChlB) is the catalytic component of the complex. The polypeptide is Light-independent protochlorophyllide reductase subunit N (Synechococcus sp. (strain CC9605)).